The chain runs to 184 residues: SsrA-binding protein (184 aa).

Residues 1-11 (MAAKKSTPTDS) show a composition bias toward polar residues. Positions 1 to 31 (MAAKKSTPTDSGKSKGKKNKAQKGAGQKGAG) are disordered.

Belongs to the SmpB family.

It localises to the cytoplasm. In terms of biological role, required for rescue of stalled ribosomes mediated by trans-translation. Binds to transfer-messenger RNA (tmRNA), required for stable association of tmRNA with ribosomes. tmRNA and SmpB together mimic tRNA shape, replacing the anticodon stem-loop with SmpB. tmRNA is encoded by the ssrA gene; the 2 termini fold to resemble tRNA(Ala) and it encodes a 'tag peptide', a short internal open reading frame. During trans-translation Ala-aminoacylated tmRNA acts like a tRNA, entering the A-site of stalled ribosomes, displacing the stalled mRNA. The ribosome then switches to translate the ORF on the tmRNA; the nascent peptide is terminated with the 'tag peptide' encoded by the tmRNA and targeted for degradation. The ribosome is freed to recommence translation, which seems to be the essential function of trans-translation. This is SsrA-binding protein from Corynebacterium jeikeium (strain K411).